The chain runs to 313 residues: Probable GTP 3',8-cyclase (313 aa).

The Radical SAM core domain maps to 4–224 (VYGRELEDLR…EIRNKHKRPR (221 aa)). Arg13 serves as a coordination point for GTP. Residues Cys20, Cys24, and Cys27 each contribute to the [4Fe-4S] cluster site. Lys60 provides a ligand contact to GTP. Position 64 (Gly64) interacts with S-adenosyl-L-methionine. Residue Thr90 participates in GTP binding. Residue Ser114 participates in S-adenosyl-L-methionine binding. Lys151 provides a ligand contact to GTP. Residues Cys244 and Cys247 each coordinate [4Fe-4S] cluster. 249–251 (RIR) serves as a coordination point for GTP. Cys261 contributes to the [4Fe-4S] cluster binding site.

This sequence belongs to the radical SAM superfamily. MoaA family. [4Fe-4S] cluster serves as cofactor.

It catalyses the reaction GTP + AH2 + S-adenosyl-L-methionine = (8S)-3',8-cyclo-7,8-dihydroguanosine 5'-triphosphate + 5'-deoxyadenosine + L-methionine + A + H(+). Its pathway is cofactor biosynthesis; molybdopterin biosynthesis. Catalyzes the cyclization of GTP to (8S)-3',8-cyclo-7,8-dihydroguanosine 5'-triphosphate. The chain is Probable GTP 3',8-cyclase from Sulfolobus acidocaldarius (strain ATCC 33909 / DSM 639 / JCM 8929 / NBRC 15157 / NCIMB 11770).